A 314-amino-acid chain; its full sequence is Probable cell division protein WhiA (314 aa).

Positions 274-308 (SLKELGEMVSTGPISKSGVNHRLRKLNDLADKIRN) form a DNA-binding region, H-T-H motif.

Belongs to the WhiA family.

Its function is as follows. Involved in cell division and chromosome segregation. In Staphylococcus aureus (strain Mu3 / ATCC 700698), this protein is Probable cell division protein WhiA.